A 263-amino-acid chain; its full sequence is Hydroxyacylglutathione hydrolase (263 aa).

The Zn(2+) site is built by histidine 55, histidine 57, aspartate 59, histidine 60, histidine 117, aspartate 134, and histidine 172.

The protein belongs to the metallo-beta-lactamase superfamily. Glyoxalase II family. In terms of assembly, monomer. Zn(2+) serves as cofactor.

The catalysed reaction is an S-(2-hydroxyacyl)glutathione + H2O = a 2-hydroxy carboxylate + glutathione + H(+). It functions in the pathway secondary metabolite metabolism; methylglyoxal degradation; (R)-lactate from methylglyoxal: step 2/2. Functionally, thiolesterase that catalyzes the hydrolysis of S-D-lactoyl-glutathione to form glutathione and D-lactic acid. This is Hydroxyacylglutathione hydrolase from Shewanella baltica (strain OS185).